We begin with the raw amino-acid sequence, 495 residues long: Probable cytosol aminopeptidase (495 aa).

Lys-264 and Asp-269 together coordinate Mn(2+). The active site involves Lys-276. Mn(2+) contacts are provided by Asp-287, Asp-346, and Glu-348. Arg-350 is a catalytic residue.

Belongs to the peptidase M17 family. It depends on Mn(2+) as a cofactor.

The protein localises to the cytoplasm. It catalyses the reaction Release of an N-terminal amino acid, Xaa-|-Yaa-, in which Xaa is preferably Leu, but may be other amino acids including Pro although not Arg or Lys, and Yaa may be Pro. Amino acid amides and methyl esters are also readily hydrolyzed, but rates on arylamides are exceedingly low.. The enzyme catalyses Release of an N-terminal amino acid, preferentially leucine, but not glutamic or aspartic acids.. In terms of biological role, presumably involved in the processing and regular turnover of intracellular proteins. Catalyzes the removal of unsubstituted N-terminal amino acids from various peptides. In Geotalea uraniireducens (strain Rf4) (Geobacter uraniireducens), this protein is Probable cytosol aminopeptidase.